Here is a 159-residue protein sequence, read N- to C-terminus: Ribosome maturation factor RimP (159 aa).

This sequence belongs to the RimP family.

Its subcellular location is the cytoplasm. Required for maturation of 30S ribosomal subunits. The sequence is that of Ribosome maturation factor RimP from Geotalea uraniireducens (strain Rf4) (Geobacter uraniireducens).